Here is a 546-residue protein sequence, read N- to C-terminus: Alkaline phosphatase PafA (546 aa).

The first 25 residues, 1-25 (MLTPKKWLLGVLVVSGMLGAQKTNA), serve as a signal peptide directing secretion. Zn(2+) is bound by residues Asp-38 and Thr-79. Thr-79 acts as the Phosphothreonine intermediate in catalysis. Residues Asn-100 and 162–164 (KDR) contribute to the substrate site. Asp-305, His-309, Asp-352, His-353, and His-486 together coordinate Zn(2+).

Requires Zn(2+) as cofactor.

The protein localises to the periplasm. The catalysed reaction is a phosphate monoester + H2O = an alcohol + phosphate. With respect to regulation, strongly inhibited by orthovanadate and EDTA. Also inhibited by inorganic phosphate. In terms of biological role, alkaline phosphatase with broad substrate specificity. Has phosphatase activity towards nucleotide phosphates with a preference for ATP. Active towards a great variety of phosphomonoesters with the exception of 2',3'-cyclic AMP and myo-inositol hexakisphosphate. The sequence is that of Alkaline phosphatase PafA from Elizabethkingia meningoseptica (Chryseobacterium meningosepticum).